The chain runs to 290 residues: Acetyl-coenzyme A carboxylase carboxyl transferase subunit beta (290 aa).

A CoA carboxyltransferase N-terminal domain is found at 28-290; it reads LMNKCSKCGT…TVREGLSHGG (263 aa). The Zn(2+) site is built by C32, C35, C51, and C54. Residues 32–54 form a C4-type zinc finger; that stretch reads CSKCGTIQYSKELDKNLKVCSSC.

This sequence belongs to the AccD/PCCB family. Acetyl-CoA carboxylase is a heterohexamer composed of biotin carboxyl carrier protein (AccB), biotin carboxylase (AccC) and two subunits each of ACCase subunit alpha (AccA) and ACCase subunit beta (AccD). Zn(2+) serves as cofactor.

The protein localises to the cytoplasm. It carries out the reaction N(6)-carboxybiotinyl-L-lysyl-[protein] + acetyl-CoA = N(6)-biotinyl-L-lysyl-[protein] + malonyl-CoA. It functions in the pathway lipid metabolism; malonyl-CoA biosynthesis; malonyl-CoA from acetyl-CoA: step 1/1. Its function is as follows. Component of the acetyl coenzyme A carboxylase (ACC) complex. Biotin carboxylase (BC) catalyzes the carboxylation of biotin on its carrier protein (BCCP) and then the CO(2) group is transferred by the transcarboxylase to acetyl-CoA to form malonyl-CoA. The polypeptide is Acetyl-coenzyme A carboxylase carboxyl transferase subunit beta (Paenibacillus sp. (strain JDR-2)).